The sequence spans 428 residues: 2,3-bisphosphoglycerate-independent phosphoglycerate mutase 2 (428 aa).

This sequence belongs to the BPG-independent phosphoglycerate mutase family. A-PGAM subfamily.

The catalysed reaction is (2R)-2-phosphoglycerate = (2R)-3-phosphoglycerate. It functions in the pathway carbohydrate degradation; glycolysis; pyruvate from D-glyceraldehyde 3-phosphate: step 3/5. Its function is as follows. Catalyzes the interconversion of 2-phosphoglycerate and 3-phosphoglycerate. This Methanocaldococcus jannaschii (strain ATCC 43067 / DSM 2661 / JAL-1 / JCM 10045 / NBRC 100440) (Methanococcus jannaschii) protein is 2,3-bisphosphoglycerate-independent phosphoglycerate mutase 2 (apgM2).